We begin with the raw amino-acid sequence, 290 residues long: Phosphoribulokinase 1 (290 aa).

12 to 20 (GSSGAGTST) contributes to the ATP binding site.

It belongs to the phosphoribulokinase family. Homooctamer.

It carries out the reaction D-ribulose 5-phosphate + ATP = D-ribulose 1,5-bisphosphate + ADP + H(+). It functions in the pathway carbohydrate biosynthesis; Calvin cycle. With respect to regulation, activated by NADH and inhibited by phosphoenolpyruvate. This chain is Phosphoribulokinase 1 (prkA), found in Cereibacter sphaeroides (Rhodobacter sphaeroides).